The sequence spans 439 residues: Choline monooxygenase, chloroplastic (439 aa).

Residues 1 to 60 constitute a chloroplast transit peptide; the sequence is MMAASASATTMLLKYPTTVCGIPNPSSNNNNDPSNNIVSIPQNTTNPTLKSRTPNKITTN. Residues 24–41 show a composition bias toward low complexity; the sequence is NPSSNNNNDPSNNIVSIP. Positions 24-54 are disordered; that stretch reads NPSSNNNNDPSNNIVSIPQNTTNPTLKSRTP. Over residues 42–54 the composition is skewed to polar residues; the sequence is QNTTNPTLKSRTP. The Rieske domain occupies 120-227; that stretch reads WQVAGISDQI…VAVWGPFVLI (108 aa). Cysteine 162, histidine 164, cysteine 181, and histidine 184 together coordinate [2Fe-2S] cluster. Residues histidine 287 and histidine 292 each coordinate Fe cation.

As to quaternary structure, homotrimer or homodimer. [2Fe-2S] cluster is required as a cofactor. The cofactor is Fe cation. It depends on Mg(2+) as a cofactor. Expressed in leaves.

The protein resides in the plastid. The protein localises to the chloroplast stroma. The enzyme catalyses choline + 2 reduced [2Fe-2S]-[ferredoxin] + O2 + 2 H(+) = betaine aldehyde hydrate + 2 oxidized [2Fe-2S]-[ferredoxin] + H2O. It participates in amine and polyamine biosynthesis; betaine biosynthesis via choline pathway; betaine aldehyde from choline (monooxygenase route): step 1/1. Functionally, catalyzes the first step of the osmoprotectant glycine betaine synthesis. This is Choline monooxygenase, chloroplastic (CMO) from Spinacia oleracea (Spinach).